The following is a 396-amino-acid chain: Na(+)/H(+) antiporter NhaA 1 (396 aa).

Helical transmembrane passes span 18–38 (LLLI…LSWL), 60–80 (LLLW…GLEV), 95–115 (IALP…IYTG), 126–146 (GWAI…ALLG), 155–175 (LFLL…IALF), 178–198 (ADLS…LFIL), 201–221 (TGVT…ICVL), 262–282 (VAYG…LAGI), 295–315 (IAAG…WIGV), 333–353 (GMAV…TLAL), and 362–382 (AARL…YYLL).

It belongs to the NhaA Na(+)/H(+) (TC 2.A.33) antiporter family.

Its subcellular location is the cell inner membrane. It catalyses the reaction Na(+)(in) + 2 H(+)(out) = Na(+)(out) + 2 H(+)(in). Its function is as follows. Na(+)/H(+) antiporter that extrudes sodium in exchange for external protons. This Syntrophotalea carbinolica (strain DSM 2380 / NBRC 103641 / GraBd1) (Pelobacter carbinolicus) protein is Na(+)/H(+) antiporter NhaA 1.